The sequence spans 410 residues: Cysteine desulfurase (410 aa).

K227 bears the N6-(pyridoxal phosphate)lysine mark. The active-site Cysteine persulfide intermediate is the C365.

This sequence belongs to the class-V pyridoxal-phosphate-dependent aminotransferase family. Csd subfamily. As to quaternary structure, homodimer. Interacts with SufE and the SufBCD complex composed of SufB, SufC and SufD. The interaction with SufE is required to mediate the direct transfer of the sulfur atom from the S-sulfanylcysteine. Pyridoxal 5'-phosphate serves as cofactor.

It localises to the cytoplasm. It catalyses the reaction (sulfur carrier)-H + L-cysteine = (sulfur carrier)-SH + L-alanine. It carries out the reaction L-selenocysteine + AH2 = hydrogenselenide + L-alanine + A + H(+). It participates in cofactor biosynthesis; iron-sulfur cluster biosynthesis. Cysteine desulfurases mobilize the sulfur from L-cysteine to yield L-alanine, an essential step in sulfur metabolism for biosynthesis of a variety of sulfur-containing biomolecules. Component of the suf operon, which is activated and required under specific conditions such as oxidative stress and iron limitation. Acts as a potent selenocysteine lyase in vitro, that mobilizes selenium from L-selenocysteine. Selenocysteine lyase activity is however unsure in vivo. The polypeptide is Cysteine desulfurase (Wigglesworthia glossinidia brevipalpis).